The chain runs to 848 residues: Protein MEI2-like 2 (848 aa).

RRM domains are found at residues 197–270 (RTLF…FSIP) and 282–355 (GTLV…PSRP). Disordered regions lie at residues 370-400 (IDQDEPRSYRIPHVGSPIASSPPGAWAQYSS), 455-523 (NQPH…SQGQ), and 826-848 (ATGDPFGNEEDNNQNERTAGEEL).

Its function is as follows. Probable RNA-binding protein that may play a role in growth regulation. The chain is Protein MEI2-like 2 (ML2) from Oryza sativa subsp. japonica (Rice).